A 353-amino-acid polypeptide reads, in one-letter code: Melanin-concentrating hormone receptor 1 (353 aa).

Residues 1–29 (MDLEASLLPTGPNASNTSDGPDNLTSAGS) are disordered. The Extracellular segment spans residues 1–44 (MDLEASLLPTGPNASNTSDGPDNLTSAGSPPRTGSISYINIIMP). The segment covering 12 to 29 (PNASNTSDGPDNLTSAGS) has biased composition (polar residues). Asn13, Asn16, and Asn23 each carry an N-linked (GlcNAc...) asparagine glycan. A helical membrane pass occupies residues 45 to 67 (SVFGTICLLGIIGNSTVIFAVVK). The Cytoplasmic segment spans residues 68–79 (KSKLHWCNNVPD). Residues 80–102 (IFIINLSVVDLLFLLGMPFMIHQ) traverse the membrane as a helical segment. The Extracellular segment spans residues 103-116 (LMGNGVWHFGETMC). Cys116 and Cys194 are oxidised to a cystine. The chain crosses the membrane as a helical span at residues 117–139 (TLITAMDANSQFTSTYILTAMAI). Residues 140–158 (DRYLATVHPISSTKFRKPS) are Cytoplasmic-facing. Residues 159 to 181 (VATLVICLLWALSFISITPVWLY) form a helical membrane-spanning segment. Topologically, residues 182-209 (ARLIPFPGGAVGCGIRLPNPDTDLYWFT) are extracellular. Residues 210 to 232 (LYQFFLAFALPFVVITAAYVRIL) traverse the membrane as a helical segment. At 233-252 (QRMTSSVAPASQRSIRLRTK) the chain is on the cytoplasmic side. A helical transmembrane segment spans residues 253–275 (RVTRTAIAICLVFFVCWAPYYVL). The Extracellular portion of the chain corresponds to 276–289 (QLTQLSISRPTLTF). The helical transmembrane segment at 290–312 (VYLYNAAISLGYANSCLNPFVYI) threads the bilayer. Residues 313-353 (VLCETFRKRLVLSVKPAAQGQLRAVSNAQTADEERTESKGT) are Cytoplasmic-facing.

The protein belongs to the G-protein coupled receptor 1 family. In terms of assembly, interacts with NCDN. As to expression, highest level in brain, particularly in the frontal cortex and hypothalamus, lower levels in the liver and heart.

Its subcellular location is the cell membrane. In terms of biological role, receptor for melanin-concentrating hormone, coupled to both G proteins that inhibit adenylyl cyclase and G proteins that activate phosphoinositide hydrolysis. This chain is Melanin-concentrating hormone receptor 1, found in Homo sapiens (Human).